The primary structure comprises 173 residues: MKHSFEVKLAAVNHYLAGHAGIISTAKLFQLSHTSLSHWINLFLLHGPRALDCRHKRSYSPEDKLCVVLYALGHSESLPRVAARFNIPSHNTVKNWIKGYRKSGNEAFIRCRKEKSMTRSDDTHENEANMTPEEMKNELRYLRAENAYLKAMQEHLLEKKRQELEKKRKSSRA.

Residues 115 to 135 (KSMTRSDDTHENEANMTPEEM) form a disordered region.

The protein belongs to the IS150/IS1296 orfA family.

This chain is Insertion element IS1397 uncharacterized 20.1 kDa protein, found in Escherichia coli.